A 285-amino-acid chain; its full sequence is Shikimate dehydrogenase (NADP(+)) (285 aa).

Shikimate is bound by residues 20-22 (SIS) and Ser67. The Proton acceptor role is filled by Lys71. Asn92 and Asp107 together coordinate shikimate. NADP(+)-binding positions include 129-133 (GAGGA) and Ile227. Tyr229 is a binding site for shikimate. Gly250 is an NADP(+) binding site.

Belongs to the shikimate dehydrogenase family. Homodimer.

It catalyses the reaction shikimate + NADP(+) = 3-dehydroshikimate + NADPH + H(+). It participates in metabolic intermediate biosynthesis; chorismate biosynthesis; chorismate from D-erythrose 4-phosphate and phosphoenolpyruvate: step 4/7. Functionally, involved in the biosynthesis of the chorismate, which leads to the biosynthesis of aromatic amino acids. Catalyzes the reversible NADPH linked reduction of 3-dehydroshikimate (DHSA) to yield shikimate (SA). In Streptococcus thermophilus (strain ATCC BAA-491 / LMD-9), this protein is Shikimate dehydrogenase (NADP(+)).